The chain runs to 190 residues: Small ribosomal subunit protein uS5 (190 aa).

Positions 21–84 (FADRLVAINR…EQAKRQMIRV (64 aa)) constitute an S5 DRBM domain. Positions 156–190 (KKEQSPRSVAQRRGKKVADILPKRDEAPAAEAAEA) are disordered. Basic and acidic residues predominate over residues 171–182 (KVADILPKRDEA).

Belongs to the universal ribosomal protein uS5 family. In terms of assembly, part of the 30S ribosomal subunit. Contacts proteins S4 and S8.

Its function is as follows. With S4 and S12 plays an important role in translational accuracy. Located at the back of the 30S subunit body where it stabilizes the conformation of the head with respect to the body. In Ruegeria pomeroyi (strain ATCC 700808 / DSM 15171 / DSS-3) (Silicibacter pomeroyi), this protein is Small ribosomal subunit protein uS5.